A 341-amino-acid polypeptide reads, in one-letter code: L-threonine 3-dehydrogenase (341 aa).

Cys38 is a binding site for Zn(2+). Catalysis depends on charge relay system residues Thr40 and His43. 6 residues coordinate Zn(2+): His63, Glu64, Cys93, Cys96, Cys99, and Cys107. Residues Ile175, Asp195, Arg200, 262 to 264 (LGI), and 286 to 287 (IY) each bind NAD(+).

This sequence belongs to the zinc-containing alcohol dehydrogenase family. Homotetramer. Requires Zn(2+) as cofactor.

It localises to the cytoplasm. It catalyses the reaction L-threonine + NAD(+) = (2S)-2-amino-3-oxobutanoate + NADH + H(+). Its pathway is amino-acid degradation; L-threonine degradation via oxydo-reductase pathway; glycine from L-threonine: step 1/2. Its function is as follows. Catalyzes the NAD(+)-dependent oxidation of L-threonine to 2-amino-3-ketobutyrate. The chain is L-threonine 3-dehydrogenase from Shewanella sp. (strain W3-18-1).